Here is a 78-residue protein sequence, read N- to C-terminus: U7-lycotoxin-Ls1e (78 aa).

An N-terminal signal peptide occupies residues 1–22; it reads MKLIIFTGLALLLIVSLIDVEA. Positions 23 to 26 are excised as a propeptide; sequence QNEG.

Belongs to the neurotoxin 19 (CSTX) family. 07 (U7-Lctx) subfamily. In terms of processing, contains 4 disulfide bonds. Expressed by the venom gland.

The protein resides in the secreted. The protein is U7-lycotoxin-Ls1e of Lycosa singoriensis (Wolf spider).